A 115-amino-acid polypeptide reads, in one-letter code: Small ribosomal subunit protein bS18c (115 aa).

A disordered region spans residues 91–115 (TNALKARTQNKDQKKEKFQINKKKK). Residues 99–109 (QNKDQKKEKFQ) show a composition bias toward basic and acidic residues.

This sequence belongs to the bacterial ribosomal protein bS18 family. Part of the 30S ribosomal subunit.

The protein resides in the plastid. Its subcellular location is the chloroplast. This chain is Small ribosomal subunit protein bS18c, found in Ipomoea purpurea (Common morning glory).